The primary structure comprises 342 residues: Probable receptor-like protein kinase At4g10390 (342 aa).

The 296-residue stretch at 41–336 (SNFSRLIGSG…IKEIPSLSFL (296 aa)) folds into the Protein kinase domain. ATP contacts are provided by residues 47–55 (IGSGGYSSI) and Lys-69. Residue Asp-165 is the Proton acceptor of the active site. Phosphoserine occurs at positions 169 and 201. Position 220 is a phosphotyrosine (Tyr-220).

It belongs to the protein kinase superfamily. Ser/Thr protein kinase family.

The enzyme catalyses L-seryl-[protein] + ATP = O-phospho-L-seryl-[protein] + ADP + H(+). It carries out the reaction L-threonyl-[protein] + ATP = O-phospho-L-threonyl-[protein] + ADP + H(+). This chain is Probable receptor-like protein kinase At4g10390, found in Arabidopsis thaliana (Mouse-ear cress).